Here is a 109-residue protein sequence, read N- to C-terminus: Large ribosomal subunit protein uL22 (109 aa).

This sequence belongs to the universal ribosomal protein uL22 family. In terms of assembly, part of the 50S ribosomal subunit.

Its function is as follows. This protein binds specifically to 23S rRNA; its binding is stimulated by other ribosomal proteins, e.g. L4, L17, and L20. It is important during the early stages of 50S assembly. It makes multiple contacts with different domains of the 23S rRNA in the assembled 50S subunit and ribosome. Functionally, the globular domain of the protein is located near the polypeptide exit tunnel on the outside of the subunit, while an extended beta-hairpin is found that lines the wall of the exit tunnel in the center of the 70S ribosome. The chain is Large ribosomal subunit protein uL22 from Psychrobacter cryohalolentis (strain ATCC BAA-1226 / DSM 17306 / VKM B-2378 / K5).